Consider the following 136-residue polypeptide: Histone H3.3 type c (136 aa).

The disordered stretch occupies residues methionine 1–lysine 30. Lysine 5 is modified (N6,N6,N6-trimethyllysine; by set1; alternate). At lysine 5 the chain carries N6,N6-dimethyllysine; by set1; alternate. N6-acetyllysine; alternate occurs at positions 5 and 10. Lysine 5 carries the post-translational modification N6-methyllysine; by set1; alternate. Lysine 10 carries the N6,N6,N6-trimethyllysine; alternate modification. An N6,N6-dimethyllysine; alternate modification is found at lysine 10. Lysine 10 carries the N6-methyllysine; alternate modification. Serine 11 carries the phosphoserine modification. N6-acetyllysine is present on lysine 15. An N6-acetyllysine; alternate mark is found at lysine 19, lysine 24, and lysine 37. Residues lysine 19, lysine 24, and lysine 37 each carry the N6-methyllysine; alternate modification. An N6,N6,N6-trimethyllysine; alternate modification is found at lysine 37. Lysine 37 is subject to N6,N6-dimethyllysine; alternate. Lysine 57 carries the N6-acetyllysine modification. Lysine 80 carries the N6,N6,N6-trimethyllysine; alternate modification. Residue lysine 80 is modified to N6,N6-dimethyllysine; alternate. Lysine 80 is subject to N6-methyllysine; alternate.

Belongs to the histone H3 family. The nucleosome is a histone octamer containing two molecules each of H2A, H2B, H3 and H4 assembled in one H3-H4 heterotetramer and two H2A-H2B heterodimers. The octamer wraps approximately 147 bp of DNA. Acetylation is generally linked to gene activation. Post-translationally, different methylation states of H3K4 mark distinct developmental phases. H3K4me2 is associated with euchromatic regions. H3K4me3 is a mark of active chromatin. set1 is responsible for all mono-, di- and tri-methylation of H3K4. H3K4me facilitates subsequent acetylation of H3 and H4. Methylation at H3K9 is linked to gene repression. In terms of processing, H3S10ph, which is linked to gene activation, prevents methylation at H3K9 but facilitates acetylation of H3 and H4.

Its subcellular location is the nucleus. The protein resides in the chromosome. Core component of nucleosome. Nucleosomes wrap and compact DNA into chromatin, limiting DNA accessibility to the cellular machineries which require DNA as a template. Histones thereby play a central role in transcription regulation, DNA repair, DNA replication and chromosomal stability. DNA accessibility is regulated via a complex set of post-translational modifications of histones, also called histone code, and nucleosome remodeling. This Dictyostelium discoideum (Social amoeba) protein is Histone H3.3 type c (H3c).